Here is a 1073-residue protein sequence, read N- to C-terminus: DNA-directed RNA polymerase subunit beta (1073 aa).

This sequence belongs to the RNA polymerase beta chain family. In plastids the minimal PEP RNA polymerase catalytic core is composed of four subunits: alpha, beta, beta', and beta''. When a (nuclear-encoded) sigma factor is associated with the core the holoenzyme is formed, which can initiate transcription.

The protein resides in the plastid. It is found in the chloroplast. It carries out the reaction RNA(n) + a ribonucleoside 5'-triphosphate = RNA(n+1) + diphosphate. Functionally, DNA-dependent RNA polymerase catalyzes the transcription of DNA into RNA using the four ribonucleoside triphosphates as substrates. This is DNA-directed RNA polymerase subunit beta from Aethionema grandiflorum (Persian stone-cress).